Consider the following 1249-residue polypeptide: Clustered mitochondria protein homolog (1249 aa).

Residues 1 to 34 (MAQTNGELEHSKAETPEQLTNGNHPEETQEEEQN) form a disordered region. The region spanning 321 to 565 (DITRSQENYL…RVTPLDVMWQ (245 aa)) is the Clu domain. Disordered stretches follow at residues 610–638 (VETASKEKSEENAESKEEGSEEKSEEALD) and 874–907 (VPATNGASQEEGKKKKKKGGDSKSPARAASPEKP). Basic and acidic residues predominate over residues 613 to 638 (ASKEKSEENAESKEEGSEEKSEEALD). TPR repeat units lie at residues 975–1008 (AKLYHQLSMLYYQTDEKEAAVELARKAVIVTERT), 1017–1050 (ILSYLNLSLFEHASGNTKTALVYIKHAMDLWKII), and 1059–1092 (ITTMNNAAVMLQHLKQYSDSRKWFEASLTVCESL). Positions 1178–1191 (TRTLGTKVQPQVGQ) are enriched in polar residues. Residues 1178–1249 (TRTLGTKVQP…KLRGSKKSSA (72 aa)) form a disordered region. Positions 1192–1205 (SAPSASGASSANPS) are enriched in low complexity.

It belongs to the CLU family. As to quaternary structure, may associate with the eukaryotic translation initiation factor 3 (eIF-3) complex.

The protein localises to the cytoplasm. In terms of biological role, mRNA-binding protein involved in proper cytoplasmic distribution of mitochondria. The sequence is that of Clustered mitochondria protein homolog from Aspergillus oryzae (strain ATCC 42149 / RIB 40) (Yellow koji mold).